The chain runs to 410 residues: Peptidase T (410 aa).

His-78 contacts Zn(2+). Asp-80 is a catalytic residue. Asp-140 contacts Zn(2+). Glu-174 acts as the Proton acceptor in catalysis. The Zn(2+) site is built by Glu-175, Asp-197, and His-379.

The protein belongs to the peptidase M20B family. Requires Zn(2+) as cofactor.

It is found in the cytoplasm. The catalysed reaction is Release of the N-terminal residue from a tripeptide.. Its function is as follows. Cleaves the N-terminal amino acid of tripeptides. The chain is Peptidase T from Vibrio cholerae serotype O1 (strain ATCC 39315 / El Tor Inaba N16961).